A 175-amino-acid polypeptide reads, in one-letter code: Large ribosomal subunit protein uL6 (175 aa).

It belongs to the universal ribosomal protein uL6 family. Part of the 50S ribosomal subunit.

Its function is as follows. This protein binds to the 23S rRNA, and is important in its secondary structure. It is located near the subunit interface in the base of the L7/L12 stalk, and near the tRNA binding site of the peptidyltransferase center. The chain is Large ribosomal subunit protein uL6 from Xylella fastidiosa (strain M12).